A 259-amino-acid chain; its full sequence is MLSKRVIPCLDVRNGRLTKGVKFVGNEDIGDPVESARRYYEEGADEIVFYDITASAEARGIFLDVVERVAEQIFIPFSVGGGISSVADMRAVLLAGAEKVSINSAAVKNPRLIGDGADAFGSQAVVVGMDVLAVPESPEIPSGYEIVIHGGRKRMGLDAIAWARCCQELGAGELCVNSIDADGTKDGYELKLTRAIADAVSLPVIASGGAGEPRHMLEAVTGGGASAALIASIVHYGQYSIRQCKEYMAAHGARMRLTW.

Catalysis depends on residues Asp11 and Asp130.

Belongs to the HisA/HisF family. In terms of assembly, heterodimer of HisH and HisF.

The protein resides in the cytoplasm. The enzyme catalyses 5-[(5-phospho-1-deoxy-D-ribulos-1-ylimino)methylamino]-1-(5-phospho-beta-D-ribosyl)imidazole-4-carboxamide + L-glutamine = D-erythro-1-(imidazol-4-yl)glycerol 3-phosphate + 5-amino-1-(5-phospho-beta-D-ribosyl)imidazole-4-carboxamide + L-glutamate + H(+). The protein operates within amino-acid biosynthesis; L-histidine biosynthesis; L-histidine from 5-phospho-alpha-D-ribose 1-diphosphate: step 5/9. Functionally, IGPS catalyzes the conversion of PRFAR and glutamine to IGP, AICAR and glutamate. The HisF subunit catalyzes the cyclization activity that produces IGP and AICAR from PRFAR using the ammonia provided by the HisH subunit. The protein is Imidazole glycerol phosphate synthase subunit HisF of Desulfovibrio desulfuricans (strain ATCC 27774 / DSM 6949 / MB).